The chain runs to 388 residues: Succinate--CoA ligase [ADP-forming] subunit beta (388 aa).

An ATP-grasp domain is found at K9 to E244. ATP-binding positions include K46, G53–G55, E99, C102, and E107. The Mg(2+) site is built by N199 and D213. Substrate-binding positions include N264 and G321–M323.

This sequence belongs to the succinate/malate CoA ligase beta subunit family. As to quaternary structure, heterotetramer of two alpha and two beta subunits. Mg(2+) serves as cofactor.

It catalyses the reaction succinate + ATP + CoA = succinyl-CoA + ADP + phosphate. The enzyme catalyses GTP + succinate + CoA = succinyl-CoA + GDP + phosphate. It functions in the pathway carbohydrate metabolism; tricarboxylic acid cycle; succinate from succinyl-CoA (ligase route): step 1/1. In terms of biological role, succinyl-CoA synthetase functions in the citric acid cycle (TCA), coupling the hydrolysis of succinyl-CoA to the synthesis of either ATP or GTP and thus represents the only step of substrate-level phosphorylation in the TCA. The beta subunit provides nucleotide specificity of the enzyme and binds the substrate succinate, while the binding sites for coenzyme A and phosphate are found in the alpha subunit. The protein is Succinate--CoA ligase [ADP-forming] subunit beta of Staphylococcus saprophyticus subsp. saprophyticus (strain ATCC 15305 / DSM 20229 / NCIMB 8711 / NCTC 7292 / S-41).